A 561-amino-acid chain; its full sequence is Arf-GAP domain and FG repeat-containing protein 1 (561 aa).

The 125-residue stretch at 11–135 (EKHLKMLRDM…WYVPPEQAKV (125 aa)) folds into the Arf-GAP domain. The C4-type zinc finger occupies 29 to 52 (CFDCDQRGPTYVNMTVGSFVCTSC). Ser167 bears the Phosphoserine mark. The disordered stretch occupies residues 170–193 (ALHLNKGTPSQSPVVGRSQGQQQE). Positions 176–191 (GTPSQSPVVGRSQGQQ) are enriched in polar residues. Residue Thr177 is modified to Phosphothreonine. Residues Ser181 and Ser362 each carry the phosphoserine modification. Residue Ser367 is glycosylated (O-linked (GlcNAc) serine). Residues 413 to 433 (SAQTQPASSGPAPFGATPSTN) form a disordered region.

Interacts with FCHO1. Interacts with EPS15R and EPS15. Post-translationally, O-glycosylated. In terms of tissue distribution, expressed in the testes (at protein level).

It is found in the nucleus. It localises to the cytoplasmic vesicle. Functionally, required for vesicle docking or fusion during acrosome biogenesis. May play a role in RNA trafficking or localization. This Mus musculus (Mouse) protein is Arf-GAP domain and FG repeat-containing protein 1 (Agfg1).